Reading from the N-terminus, the 156-residue chain is Translationally controlled tumor protein 2 (156 aa).

The region spanning 1 to 156 is the TCTP domain; the sequence is MLVYQDILTG…LAYGLKEIKC (156 aa).

It belongs to the TCTP family. Expressed in stems, cauline leaves, minor veins of rosette leaves, roots, lateral root primordia, vascular tissues of petioles and inflorescences, base of siliques, papillae and ovules. Not detected in root meristems, anthers or seeds. Expressed in stomata, trichomes and root cortex.

It is found in the nucleus. Its subcellular location is the cytoplasm. In terms of biological role, regulates proliferation. Induces whole plant regeneration when expressed in heterologous systems. Involved in root growth and lateral root development, with a probable role in cell reprogramming. The long-distance transport of TCTP RNA and/or protein in plants may have an important role in regulation of growth and development. The protein is Translationally controlled tumor protein 2 of Arabidopsis thaliana (Mouse-ear cress).